We begin with the raw amino-acid sequence, 485 residues long: Bifunctional protein GlmU (485 aa).

Residues 1-241 form a pyrophosphorylase region; it reads MSASDFSSAV…ARELAGVNDR (241 aa). Residues 13 to 16, K27, Q84, and 89 to 90 contribute to the UDP-N-acetyl-alpha-D-glucosamine site; these read LAAG and GT. D114 serves as a coordination point for Mg(2+). The UDP-N-acetyl-alpha-D-glucosamine site is built by G151, E166, N181, and N239. Mg(2+) is bound at residue N239. Residues 242-262 are linker; sequence VQLAEAGAELNRRTVIAAMRG. Residues 263–485 are N-acetyltransferase; that stretch reads GATIVDPATT…AAQNVHNQEG (223 aa). Residues R344 and K362 each coordinate UDP-N-acetyl-alpha-D-glucosamine. H374 (proton acceptor) is an active-site residue. Residues Y377 and N388 each contribute to the UDP-N-acetyl-alpha-D-glucosamine site. Acetyl-CoA contacts are provided by residues A391, 397 to 398, S416, and A434; that span reads NY. The interval 465-485 is disordered; sequence RPGTAAAQAAEAAQNVHNQEG. Positions 469–478 are enriched in low complexity; sequence AAAQAAEAAQ.

It in the N-terminal section; belongs to the N-acetylglucosamine-1-phosphate uridyltransferase family. In the C-terminal section; belongs to the transferase hexapeptide repeat family. As to quaternary structure, homotrimer. Mg(2+) is required as a cofactor.

Its subcellular location is the cytoplasm. It catalyses the reaction alpha-D-glucosamine 1-phosphate + acetyl-CoA = N-acetyl-alpha-D-glucosamine 1-phosphate + CoA + H(+). The catalysed reaction is N-acetyl-alpha-D-glucosamine 1-phosphate + UTP + H(+) = UDP-N-acetyl-alpha-D-glucosamine + diphosphate. It participates in nucleotide-sugar biosynthesis; UDP-N-acetyl-alpha-D-glucosamine biosynthesis; N-acetyl-alpha-D-glucosamine 1-phosphate from alpha-D-glucosamine 6-phosphate (route II): step 2/2. It functions in the pathway nucleotide-sugar biosynthesis; UDP-N-acetyl-alpha-D-glucosamine biosynthesis; UDP-N-acetyl-alpha-D-glucosamine from N-acetyl-alpha-D-glucosamine 1-phosphate: step 1/1. The protein operates within bacterial outer membrane biogenesis; LPS lipid A biosynthesis. In terms of biological role, catalyzes the last two sequential reactions in the de novo biosynthetic pathway for UDP-N-acetylglucosamine (UDP-GlcNAc). The C-terminal domain catalyzes the transfer of acetyl group from acetyl coenzyme A to glucosamine-1-phosphate (GlcN-1-P) to produce N-acetylglucosamine-1-phosphate (GlcNAc-1-P), which is converted into UDP-GlcNAc by the transfer of uridine 5-monophosphate (from uridine 5-triphosphate), a reaction catalyzed by the N-terminal domain. The sequence is that of Bifunctional protein GlmU from Corynebacterium glutamicum (strain ATCC 13032 / DSM 20300 / JCM 1318 / BCRC 11384 / CCUG 27702 / LMG 3730 / NBRC 12168 / NCIMB 10025 / NRRL B-2784 / 534).